A 245-amino-acid chain; its full sequence is Myozenin-3 (245 aa).

S31 is modified (phosphoserine). Positions 50–67 (LLFQKRQRRVQKFTFELS) are binding to ACTN2, PPP3CA and TCAP. The segment at 67–108 (SESLQAILASSARGKVAGRAAQATVPNGLEEQNHHSETHVFQ) is binding to FLNC. The segment at 93-134 (NGLEEQNHHSETHVFQGSPGDPGITHLGAAGTGSVRSPSALA) is disordered. The binding to ACTN2 stretch occupies residues 180–201 (PIPRDYRNFNKTPVPFGGPHVR).

The protein belongs to the myozenin family. Interacts with ACTN2, LDB3, FLNC, PPP3CA and TCAP. As to expression, expressed specifically in skeletal muscle and is enriched in fast-twitch muscle fibers. Not detected in heart.

Its subcellular location is the cytoplasm. The protein resides in the myofibril. The protein localises to the sarcomere. It localises to the z line. In terms of biological role, myozenins may serve as intracellular binding proteins involved in linking Z line proteins such as alpha-actinin, gamma-filamin, TCAP/telethonin, LDB3/ZASP and localizing calcineurin signaling to the sarcomere. Plays an important role in the modulation of calcineurin signaling. May play a role in myofibrillogenesis. This is Myozenin-3 from Mus musculus (Mouse).